A 139-amino-acid polypeptide reads, in one-letter code: ATP synthase epsilon chain (139 aa).

The protein belongs to the ATPase epsilon chain family. In terms of assembly, F-type ATPases have 2 components, CF(1) - the catalytic core - and CF(0) - the membrane proton channel. CF(1) has five subunits: alpha(3), beta(3), gamma(1), delta(1), epsilon(1). CF(0) has three main subunits: a, b and c.

It is found in the cell inner membrane. Its function is as follows. Produces ATP from ADP in the presence of a proton gradient across the membrane. This Acinetobacter baylyi (strain ATCC 33305 / BD413 / ADP1) protein is ATP synthase epsilon chain.